A 260-amino-acid chain; its full sequence is Histidine-binding periplasmic protein (260 aa).

The N-terminal stretch at 1–22 is a signal peptide; it reads MKKLVLSLSLVLAFSSATAAFA. The cysteines at positions 60 and 67 are disulfide-linked. Residues Ser91, Ser92, Ser94, Arg99, Thr143, and Asp183 each contribute to the L-histidine site.

It belongs to the bacterial solute-binding protein 3 family. In terms of assembly, the complex is composed of two ATP-binding proteins (HisP), two transmembrane proteins (HisM and HisQ) and a solute-binding protein (HisJ).

Its subcellular location is the periplasm. Part of the ABC transporter complex HisPMQJ involved in histidine transport. Binds histidine. Interacts with HisQMP and stimulates ATPase activity of HisP, which results in histidine translocation. The chain is Histidine-binding periplasmic protein (hisJ) from Escherichia coli O157:H7.